Consider the following 157-residue polypeptide: uncharacterized protein (157 aa).

This sequence belongs to the mimivirus L242/L243 family.

This is an uncharacterized protein from Acanthamoeba polyphaga (Amoeba).